The primary structure comprises 306 residues: MNWITNYVRPKINSILGRREIPENLWIKDPTSGEMIFHKDLEANQFVAPNSGHHMRISAKNRLMHFFDDGVYTALENPKVVTDPLKFRDEKRYIDRLKDYRSKLGVDDNILSARGTIEGLPIIATVQDFAFMGGSLGMASGEAIIKAFDTAIAERRPLVLFSASGGARMQEGTLSLMQMPRTTVAIEMLKEAKLPYIVVLTNPTTGGVTASYAMLGDIHIAEPGAMIGFAGPRVIQQTIRETLPEGFQSSEYLLEHGMIDMVVSRLEMKTTIARLLRLMMKRPAVFNPSDPSPTDSQTSLSTTKAA.

The 270-residue stretch at 25–294 folds into the CoA carboxyltransferase N-terminal domain; the sequence is LWIKDPTSGE…VFNPSDPSPT (270 aa). Positions 286–306 are disordered; the sequence is FNPSDPSPTDSQTSLSTTKAA. Over residues 288-306 the composition is skewed to low complexity; that stretch reads PSDPSPTDSQTSLSTTKAA.

Belongs to the AccD/PCCB family. In terms of assembly, acetyl-CoA carboxylase is a heterohexamer composed of biotin carboxyl carrier protein (AccB), biotin carboxylase (AccC) and two subunits each of ACCase subunit alpha (AccA) and ACCase subunit beta (AccD).

It is found in the cytoplasm. It catalyses the reaction N(6)-carboxybiotinyl-L-lysyl-[protein] + acetyl-CoA = N(6)-biotinyl-L-lysyl-[protein] + malonyl-CoA. It functions in the pathway lipid metabolism; malonyl-CoA biosynthesis; malonyl-CoA from acetyl-CoA: step 1/1. Component of the acetyl coenzyme A carboxylase (ACC) complex. Biotin carboxylase (BC) catalyzes the carboxylation of biotin on its carrier protein (BCCP) and then the CO(2) group is transferred by the transcarboxylase to acetyl-CoA to form malonyl-CoA. The chain is Acetyl-coenzyme A carboxylase carboxyl transferase subunit beta from Bartonella grahamii (strain as4aup).